A 348-amino-acid polypeptide reads, in one-letter code: Zinc-type alcohol dehydrogenase-like protein C2E1P3.01 (348 aa).

This sequence belongs to the zinc-containing alcohol dehydrogenase family. Quinone oxidoreductase subfamily.

The protein localises to the mitochondrion. The sequence is that of Zinc-type alcohol dehydrogenase-like protein C2E1P3.01 from Schizosaccharomyces pombe (strain 972 / ATCC 24843) (Fission yeast).